A 391-amino-acid polypeptide reads, in one-letter code: Transforming growth factor beta-1 proprotein (391 aa).

The first 18 residues, 1–18 (MDPSPLLALLLLLGAARA), serve as a signal peptide directing secretion. Positions 19-63 (LSTCQRLDLEAAKKKRIEAVRGQILSKLRLTAPPPASETPPRPLP) are straightjacket domain. The tract at residues 64–270 (DDVRALYNST…ALPAERANEL (207 aa)) is arm domain. N-linked (GlcNAc...) asparagine glycans are attached at residues Asn-71, Asn-126, and Asn-171. The segment at 221–249 (EMGPGHADEMRISIEGFEQQRGDMQSIAK) is bowtie tail. Positions 241 to 243 (RGD) match the Cell attachment site motif. 4 disulfides stabilise this stretch: Cys-284–Cys-295, Cys-294–Cys-357, Cys-323–Cys-388, and Cys-327–Cys-390.

Belongs to the TGF-beta family. In terms of assembly, latency-associated peptide: Homodimer; disulfide-linked. Latency-associated peptide: Interacts with Transforming growth factor beta-1 (TGF-beta-1) chain; interaction is non-covalent and maintains (TGF-beta-1) in a latent state; each Latency-associated peptide (LAP) monomer interacts with TGF-beta-1 in the other monomer. Transforming growth factor beta-1: Homodimer; disulfide-linked. Transforming growth factor beta-1: Interacts with TGF-beta receptors (TGFBR1 and TGFBR2), leading to signal transduction. Transforming growth factor beta-1 proprotein: The precursor proprotein is cleaved in the Golgi apparatus to form Transforming growth factor beta-1 (TGF-beta-1) and Latency-associated peptide (LAP) chains, which remain non-covalently linked, rendering TGF-beta-1 inactive.

Its subcellular location is the secreted. It is found in the extracellular space. The protein localises to the extracellular matrix. Transforming growth factor beta-1 proprotein: Precursor of the Latency-associated peptide (LAP) and Transforming growth factor beta-1 (TGF-beta-1) chains, which constitute the regulatory and active subunit of TGF-beta-1, respectively. In terms of biological role, required to maintain the Transforming growth factor beta-1 (TGF-beta-1) chain in a latent state during storage in extracellular matrix. Associates non-covalently with TGF-beta-1 and regulates its activation via interaction with 'milieu molecules', such as LTBP1, LRRC32/GARP and LRRC33/NRROS, that control activation of TGF-beta-1. Interaction with integrins (ITGAV:ITGB6 or ITGAV:ITGB8) results in distortion of the Latency-associated peptide chain and subsequent release of the active TGF-beta-1. Functionally, transforming growth factor beta-1: Multifunctional protein that regulates the growth and differentiation of various cell types and is involved in various processes, such as normal development, immune function, microglia function and responses to neurodegeneration. Activation into mature form follows different steps: following cleavage of the proprotein in the Golgi apparatus, Latency-associated peptide (LAP) and Transforming growth factor beta-1 (TGF-beta-1) chains remain non-covalently linked rendering TGF-beta-1 inactive during storage in extracellular matrix. At the same time, LAP chain interacts with 'milieu molecules', such as LTBP1, LRRC32/GARP and LRRC33/NRROS that control activation of TGF-beta-1 and maintain it in a latent state during storage in extracellular milieus. TGF-beta-1 is released from LAP by integrins (ITGAV:ITGB6 or ITGAV:ITGB8): integrin-binding to LAP stabilizes an alternative conformation of the LAP bowtie tail and results in distortion of the LAP chain and subsequent release of the active TGF-beta-1. Once activated following release of LAP, TGF-beta-1 acts by binding to TGF-beta receptors (TGFBR1 and TGFBR2), which transduce signal. While expressed by many cells types, TGF-beta-1 only has a very localized range of action within cell environment thanks to fine regulation of its activation by Latency-associated peptide chain (LAP) and 'milieu molecules'. Plays an important role in bone remodeling: acts as a potent stimulator of osteoblastic bone formation. Can promote either T-helper 17 cells (Th17) or regulatory T-cells (Treg) lineage differentiation in a concentration-dependent manner. Can induce epithelial-to-mesenchymal transition (EMT) and cell migration in various cell types. The polypeptide is Transforming growth factor beta-1 proprotein (TGFB1) (Gallus gallus (Chicken)).